The following is a 456-amino-acid chain: Gamma-aminobutyric acid receptor subunit alpha-1 (456 aa).

Positions 1 to 27 (MRKSPGLSDCLWAWILLLSTLTGRSYG) are cleaved as a signal peptide. Topologically, residues 28–253 (QPSLQDELKD…FHLKRKIGYF (226 aa)) are extracellular. An N-linked (GlcNAc...) asparagine glycan is attached at asparagine 38. Arginine 94 contacts 4-aminobutanoate. Asparagine 138 carries N-linked (GlcNAc...) asparagine glycosylation. Threonine 157 provides a ligand contact to 4-aminobutanoate. Cysteines 166 and 180 form a disulfide. A helical membrane pass occupies residues 254–274 (VIQTYLPCIMTVILSQVSFWL). Topologically, residues 275–279 (NRESV) are cytoplasmic. The helical transmembrane segment at 280–301 (PARTVFGVTTVLTMTTLSISAR) threads the bilayer. Topologically, residues 302–311 (NSLPKVAYAT) are extracellular. Residues 312 to 333 (AMDWFIAVCYAFVFSALIEFAT) form a helical membrane-spanning segment. The Cytoplasmic portion of the chain corresponds to 334–421 (VNYFTKRGYA…TFNSVSKIDR (88 aa)). Residues 422–441 (LSRIAFPLLFGIFNLIYWAT) traverse the membrane as a helical segment. Residues 442-456 (YLNREPQLKAPTPHQ) lie on the Extracellular side of the membrane.

Belongs to the ligand-gated ion channel (TC 1.A.9) family. Gamma-aminobutyric acid receptor (TC 1.A.9.5) subfamily. GABRA1 sub-subfamily. Heteropentamer, formed by a combination of alpha (GABRA1-6), beta (GABRB1-3), gamma (GABRG1-3), delta (GABRD), epsilon (GABRE), rho (GABRR1-3), pi (GABRP) and theta (GABRQ) subunits, each subunit exhibiting distinct physiological and pharmacological properties. Interacts with UBQLN1. Interacts with TRAK1. Interacts with KIF21B. Identified in a complex of 720 kDa composed of LHFPL4, NLGN2, GABRA1, GABRB2, GABRG2 and GABRB3. Interacts with LHFPL4. Interacts with NLGN2. Interacts with SHISA7; interaction leads to the regulation of GABA(A) receptor trafficking, channel deactivation kinetics and pharmacology.

It is found in the postsynaptic cell membrane. The protein resides in the cell membrane. It localises to the cytoplasmic vesicle membrane. The catalysed reaction is chloride(in) = chloride(out). With respect to regulation, allosterically activated by benzodiazepines, the neuroanesthetic alphaxalone and pentobarbital. Inhibited by the antagonist bicuculline. Potentiated by histamine. Functionally, alpha subunit of the heteropentameric ligand-gated chloride channel gated by gamma-aminobutyric acid (GABA), a major inhibitory neurotransmitter in the brain. GABA-gated chloride channels, also named GABA(A) receptors (GABAAR), consist of five subunits arranged around a central pore and contain GABA active binding site(s) located at the alpha and beta subunit interface(s). When activated by GABA, GABAARs selectively allow the flow of chloride anions across the cell membrane down their electrochemical gradient. Alpha-1/GABRA1-containing GABAARs are largely synaptic. Chloride influx into the postsynaptic neuron following GABAAR opening decreases the neuron ability to generate a new action potential, thereby reducing nerve transmission. GABAARs containing alpha-1 and beta-2 or -3 subunits exhibit synaptogenic activity; the gamma-2 subunit being necessary but not sufficient to induce rapid synaptic contacts formation. GABAARs function also as histamine receptor where histamine binds at the interface of two neighboring beta subunits and potentiates GABA response. GABAARs containing alpha, beta and epsilon subunits also permit spontaneous chloride channel activity while preserving the structural information required for GABA-gated openings. Alpha-1-mediated plasticity in the orbitofrontal cortex regulates context-dependent action selection. Together with rho subunits, may also control neuronal and glial GABAergic transmission in the cerebellum. The chain is Gamma-aminobutyric acid receptor subunit alpha-1 (GABRA1) from Pongo abelii (Sumatran orangutan).